We begin with the raw amino-acid sequence, 254 residues long: Enolase-phosphatase E1 (254 aa).

Mg(2+) is bound by residues aspartate 13 and glutamate 15. Residues 127–128 (SS) and lysine 173 contribute to the substrate site. Residue aspartate 200 participates in Mg(2+) binding.

Belongs to the HAD-like hydrolase superfamily. MasA/MtnC family. As to quaternary structure, monomer. Mg(2+) serves as cofactor.

It localises to the cytoplasm. Its subcellular location is the nucleus. It carries out the reaction 5-methylsulfanyl-2,3-dioxopentyl phosphate + H2O = 1,2-dihydroxy-5-(methylsulfanyl)pent-1-en-3-one + phosphate. It functions in the pathway amino-acid biosynthesis; L-methionine biosynthesis via salvage pathway; L-methionine from S-methyl-5-thio-alpha-D-ribose 1-phosphate: step 3/6. Its pathway is amino-acid biosynthesis; L-methionine biosynthesis via salvage pathway; L-methionine from S-methyl-5-thio-alpha-D-ribose 1-phosphate: step 4/6. Bifunctional enzyme that catalyzes the enolization of 2,3-diketo-5-methylthiopentyl-1-phosphate (DK-MTP-1-P) into the intermediate 2-hydroxy-3-keto-5-methylthiopentenyl-1-phosphate (HK-MTPenyl-1-P), which is then dephosphorylated to form the acireductone 1,2-dihydroxy-3-keto-5-methylthiopentene (DHK-MTPene). In Sclerotinia sclerotiorum (strain ATCC 18683 / 1980 / Ss-1) (White mold), this protein is Enolase-phosphatase E1 (utr4).